The following is a 552-amino-acid chain: Non-structural protein NS1 (552 aa).

It belongs to the orbivirus non-structural protein NS1 family.

The chain is Non-structural protein NS1 (Segment-5) from Epizootic hemorrhagic disease virus 2 (strain Alberta) (EHDV-2).